Consider the following 201-residue polypeptide: FMN-dependent NADH:quinone oxidoreductase (201 aa).

Residues S10, 16–18 (SQS), 96–99 (MYNF), and 140–143 (SRGG) each bind FMN.

It belongs to the azoreductase type 1 family. As to quaternary structure, homodimer. FMN serves as cofactor.

The catalysed reaction is 2 a quinone + NADH + H(+) = 2 a 1,4-benzosemiquinone + NAD(+). It catalyses the reaction N,N-dimethyl-1,4-phenylenediamine + anthranilate + 2 NAD(+) = 2-(4-dimethylaminophenyl)diazenylbenzoate + 2 NADH + 2 H(+). Quinone reductase that provides resistance to thiol-specific stress caused by electrophilic quinones. In terms of biological role, also exhibits azoreductase activity. Catalyzes the reductive cleavage of the azo bond in aromatic azo compounds to the corresponding amines. This Salmonella paratyphi A (strain ATCC 9150 / SARB42) protein is FMN-dependent NADH:quinone oxidoreductase.